We begin with the raw amino-acid sequence, 58 residues long: Preprotein translocase subunit SecG (58 aa).

Topologically, residues 1-33 (MARRRKYEGLNPFVAAGLIKFSEEGELEKIKLS) are cytoplasmic. The helical transmembrane segment at 34-55 (PKAAIAISLAIIAAILALNLLL) threads the bilayer. At 56–58 (PPP) the chain is on the extracellular side.

This sequence belongs to the SEC61-beta family. Component of the protein translocase complex. Heterotrimer consisting of alpha (SecY), beta (SecG) and gamma (SecE) subunits. Can form oligomers of the heterotrimer.

It is found in the cell membrane. Its function is as follows. Involved in protein export. The function of the beta subunit is unknown, but it may be involved in stabilization of the trimeric complex. This chain is Preprotein translocase subunit SecG, found in Pyrobaculum calidifontis (strain DSM 21063 / JCM 11548 / VA1).